Here is a 408-residue protein sequence, read N- to C-terminus: Gustatory receptor 10a (408 aa).

Residues 1 to 20 (MTSPDERKSFWERHEFKFYR) lie on the Cytoplasmic side of the membrane. A helical transmembrane segment spans residues 21–38 (YGHVYALIYGQVVIDYVP). Residues 39–48 (QRALKRGVKV) lie on the Extracellular side of the membrane. Residues 49-69 (LLIAYGHLFSMLLIVVLPGYF) traverse the membrane as a helical segment. Residues 70–86 (CYHFRTLTDTLDRRLQL) are Cytoplasmic-facing. The chain crosses the membrane as a helical span at residues 87-107 (LFYVSFTNTAIKYATVIVTYV). At 108-144 (ANTVHFEAINQRCTMQRTHLEFEFKNAPQEPKRPFEF) the chain is on the extracellular side. The chain crosses the membrane as a helical span at residues 145 to 165 (FMYFKFCLINLMMMIQVCGIF). Residues 166–270 (AQYGEVGKGS…RESFRMHQFQ (105 aa)) are Cytoplasmic-facing. Residues 271 to 291 (LIGLMLSTLINNLTNFYTLFH) form a helical membrane-spanning segment. Topologically, residues 292–304 (MLAKQSLEEVSYP) are extracellular. A helical transmembrane segment spans residues 305–325 (VVVGSVYATGFYIDTYIVALI). The Cytoplasmic segment spans residues 326–381 (NEHIKLELEAVALTMRRFAEPREMDERLTREIEHLSLELLNYQPPMLCGLLHLDRR). Residues 382 to 402 (LVYLIAVTAFSYFITLVQFDL) traverse the membrane as a helical segment. The Extracellular segment spans residues 403-408 (YLRKKS).

The protein belongs to the insect chemoreceptor superfamily. Gustatory receptor (GR) family. Gr10a subfamily. As to expression, expressed in the medial aspect of the third antennal segment, and in neurons of the terminal external chemosensory organ of larvae.

The protein resides in the cell membrane. Probable gustatory receptor which mediates acceptance or avoidance behavior, depending on its substrates. The protein is Gustatory receptor 10a (Gr10a) of Drosophila melanogaster (Fruit fly).